A 391-amino-acid polypeptide reads, in one-letter code: Probable sugar efflux transporter (391 aa).

12 helical membrane-spanning segments follow: residues 16–36 (VFVFSLSAFIFNTTEFVPVAL), 51–71 (VGLMITAYAWVVSLGSLPLML), 82–102 (LLFLFALFILSHILSALAWNF), 103–123 (WVLLISRMGIAFAHSIFWSIT), 138–158 (QALGLLALGSSLAMILGLPLG), 170–190 (TFGVIGGVATLIMLLMWKLLP), 210–230 (PLLVGIYLLVIMVISGHFTTY), 247–267 (ITTLMLFVFGLAGVAGSFLFG), 277–297 (FIAFAMVLVICPQLLLFVFKN), 300–320 (WVIFLQIFLWGIGITSLTIAL), 338–358 (IFSGSYNVGIGSGALFGSIVI), and 361–381 (LGLEYIGFVGGALGLLALFWL).

The protein belongs to the major facilitator superfamily. SotB (TC 2.A.1.2) family.

It is found in the cell inner membrane. In terms of biological role, involved in the efflux of sugars. The physiological role may be the reduction of the intracellular concentration of toxic sugars or sugar metabolites. This chain is Probable sugar efflux transporter, found in Helicobacter pylori (strain P12).